Here is a 228-residue protein sequence, read N- to C-terminus: MVRYLSQQEAIDIDQELFNVYKYSVDQLMELAGLSCSIAIYKCYSKLKKILVCCGPGNNGGDGLVAARHLKLFGFEPSVYYPKRTEKPLYQNLTHQCLAMKIDFLNDIPDAKEMSNNYELIVDALFGFSFKPPVRPEFEKVMNVLGKSKVPICSIDIPSGWDVENGCPENGILPDMLISLTAPKKCAKFFNGRFHYLGGRFVPPDLERKYDLKINSEYSGTECCVQLK.

The region spanning 10 to 214 (AIDIDQELFN…DLERKYDLKI (205 aa)) is the YjeF N-terminal domain. 58–62 (NNGGD) contributes to the (6S)-NADPHX binding site. K(+) is bound by residues Asn59 and Asp123. Residues 127–133 (GFSFKPP) and Asp156 each bind (6S)-NADPHX. Ser159 is a K(+) binding site.

The protein belongs to the NnrE/AIBP family. K(+) serves as cofactor.

It catalyses the reaction (6R)-NADHX = (6S)-NADHX. It carries out the reaction (6R)-NADPHX = (6S)-NADPHX. Its function is as follows. Catalyzes the epimerization of the S- and R-forms of NAD(P)HX, a damaged form of NAD(P)H that is a result of enzymatic or heat-dependent hydration. This is a prerequisite for the S-specific NAD(P)H-hydrate dehydratase to allow the repair of both epimers of NAD(P)HX. The protein is NAD(P)H-hydrate epimerase of Pediculus humanus subsp. corporis (Body louse).